Here is a 1246-residue protein sequence, read N- to C-terminus: Helicase SWR1 (1246 aa).

Disordered stretches follow at residues 1-53 (MSEH…PKET), 60-79 (DGSDDVNRLEEPHNPVSSTA), 109-188 (QSPK…LADA), 202-292 (PVPE…QHLV), and 314-381 (GDGL…DIGP). A compositionally biased stretch (basic and acidic residues) spans 27–52 (FAEEDRGSSDTEQLTDNKNDGEEPKE). The segment covering 149–166 (SNQDDQDEELDLEMEEAD) has biased composition (acidic residues). Positions 167 to 178 (SAGRESGEGNRD) are enriched in basic and acidic residues. The span at 226 to 255 (APTSTVSETLPSTKLSLAQPANQTDQSLTD) shows a compositional bias: polar residues. Acidic residues-rich tracts occupy residues 320–331 (VEEETMGDEDND) and 338–362 (EEEDGHEYDSEEEYDEDEDEEEEGA). Over residues 363 to 381 (KEDNVDWDDRQDKEGDIGP) the composition is skewed to basic and acidic residues. The region spanning 405–570 (ASLWSNNMNG…WSLLYFLMPG (166 aa)) is the Helicase ATP-binding domain. Residue 418–425 (DEMGLGKT) participates in ATP binding. The DEAH box signature appears at 521 to 524 (DEAH). Residues 939-1092 (KLQKLFEMLR…KMVIQEGGFN (154 aa)) enclose the Helicase C-terminal domain.

It belongs to the SNF2/RAD54 helicase family. SWR1 subfamily. In terms of assembly, component of the SWR1 chromatin-remodeling complex.

The protein resides in the nucleus. The enzyme catalyses ATP + H2O = ADP + phosphate + H(+). In terms of biological role, catalytic component of the SWR1 complex which mediates the ATP-dependent exchange of histone H2A for the H2A variant HZT1 leading to transcriptional regulation of selected genes by chromatin remodeling. This chain is Helicase SWR1 (SWR1), found in Cryptococcus neoformans var. neoformans serotype D (strain B-3501A) (Filobasidiella neoformans).